The sequence spans 166 residues: Phosphopantetheine adenylyltransferase (166 aa).

Position 9 (serine 9) interacts with substrate. ATP is bound by residues 9-10 (SF) and histidine 17. The substrate site is built by lysine 41, threonine 74, and arginine 88. ATP-binding positions include 89-91 (GLR), glutamate 99, and 124-130 (DSFISSS).

This sequence belongs to the bacterial CoaD family. In terms of assembly, homohexamer. Mg(2+) is required as a cofactor.

It localises to the cytoplasm. It carries out the reaction (R)-4'-phosphopantetheine + ATP + H(+) = 3'-dephospho-CoA + diphosphate. It functions in the pathway cofactor biosynthesis; coenzyme A biosynthesis; CoA from (R)-pantothenate: step 4/5. Functionally, reversibly transfers an adenylyl group from ATP to 4'-phosphopantetheine, yielding dephospho-CoA (dPCoA) and pyrophosphate. This chain is Phosphopantetheine adenylyltransferase, found in Lactobacillus johnsonii (strain CNCM I-12250 / La1 / NCC 533).